Reading from the N-terminus, the 266-residue chain is Carboxy-S-adenosyl-L-methionine synthase (266 aa).

The tract at residues M1 to D24 is disordered. S-adenosyl-L-methionine contacts are provided by residues Y58, G83–S85, D108–N109, D136–I137, N151, and R218.

It belongs to the class I-like SAM-binding methyltransferase superfamily. Cx-SAM synthase family. Homodimer.

The catalysed reaction is prephenate + S-adenosyl-L-methionine = carboxy-S-adenosyl-L-methionine + 3-phenylpyruvate + H2O. In terms of biological role, catalyzes the conversion of S-adenosyl-L-methionine (SAM) to carboxy-S-adenosyl-L-methionine (Cx-SAM). The sequence is that of Carboxy-S-adenosyl-L-methionine synthase from Yersinia enterocolitica serotype O:8 / biotype 1B (strain NCTC 13174 / 8081).